Consider the following 262-residue polypeptide: 5'-nucleotidase SurE (262 aa).

Aspartate 11, aspartate 12, serine 43, and asparagine 101 together coordinate a divalent metal cation.

The protein belongs to the SurE nucleotidase family. A divalent metal cation is required as a cofactor.

The protein resides in the cytoplasm. The catalysed reaction is a ribonucleoside 5'-phosphate + H2O = a ribonucleoside + phosphate. Its function is as follows. Nucleotidase that shows phosphatase activity on nucleoside 5'-monophosphates. The polypeptide is 5'-nucleotidase SurE (Prochlorococcus marinus (strain NATL1A)).